The following is a 328-amino-acid chain: Cytochrome c biogenesis protein CcsA (328 aa).

Transmembrane regions (helical) follow at residues 13–33, 46–66, 73–93, 101–121, 146–166, 234–254, 263–283, and 295–315; these read ISFS…LVNL, GIVI…IYSG, LYES…VSYF, LNAI…SGLL, MILG…LLVI, IISL…VWAN, WDPK…YLHI, and AIVA…VNLL.

This sequence belongs to the CcmF/CycK/Ccl1/NrfE/CcsA family. In terms of assembly, may interact with Ccs1.

The protein resides in the plastid. Its subcellular location is the chloroplast thylakoid membrane. Required during biogenesis of c-type cytochromes (cytochrome c6 and cytochrome f) at the step of heme attachment. This Barbarea verna (Land cress) protein is Cytochrome c biogenesis protein CcsA.